A 324-amino-acid polypeptide reads, in one-letter code: Beta-ketoacyl-[acyl-carrier-protein] synthase III (324 aa).

Catalysis depends on residues Cys114 and His246. Residues 247–251 are ACP-binding; sequence QANLR. The active site involves Asn276.

The protein belongs to the thiolase-like superfamily. FabH family. In terms of assembly, homodimer.

It localises to the cytoplasm. It catalyses the reaction malonyl-[ACP] + acetyl-CoA + H(+) = 3-oxobutanoyl-[ACP] + CO2 + CoA. It functions in the pathway lipid metabolism; fatty acid biosynthesis. In terms of biological role, catalyzes the condensation reaction of fatty acid synthesis by the addition to an acyl acceptor of two carbons from malonyl-ACP. Catalyzes the first condensation reaction which initiates fatty acid synthesis and may therefore play a role in governing the total rate of fatty acid production. Possesses both acetoacetyl-ACP synthase and acetyl transacylase activities. Its substrate specificity determines the biosynthesis of branched-chain and/or straight-chain of fatty acids. This is Beta-ketoacyl-[acyl-carrier-protein] synthase III from Campylobacter jejuni (strain RM1221).